The sequence spans 282 residues: 2,3,4,5-tetrahydropyridine-2,6-dicarboxylate N-succinyltransferase (282 aa).

Substrate-binding residues include Arg-109 and Asp-146.

It belongs to the transferase hexapeptide repeat family. Homotrimer.

It localises to the cytoplasm. The enzyme catalyses (S)-2,3,4,5-tetrahydrodipicolinate + succinyl-CoA + H2O = (S)-2-succinylamino-6-oxoheptanedioate + CoA. Its pathway is amino-acid biosynthesis; L-lysine biosynthesis via DAP pathway; LL-2,6-diaminopimelate from (S)-tetrahydrodipicolinate (succinylase route): step 1/3. The protein is 2,3,4,5-tetrahydropyridine-2,6-dicarboxylate N-succinyltransferase of Bartonella bacilliformis (strain ATCC 35685 / KC583 / Herrer 020/F12,63).